Consider the following 213-residue polypeptide: Orotate phosphoribosyltransferase (213 aa).

Lysine 26 serves as a coordination point for 5-phospho-alpha-D-ribose 1-diphosphate. 34-35 provides a ligand contact to orotate; the sequence is FF. Residues 72-73, arginine 99, lysine 100, lysine 103, histidine 105, and 124-132 each bind 5-phospho-alpha-D-ribose 1-diphosphate; these read YK and DDVITAGTA. The orotate site is built by threonine 128 and arginine 156.

This sequence belongs to the purine/pyrimidine phosphoribosyltransferase family. PyrE subfamily. As to quaternary structure, homodimer. It depends on Mg(2+) as a cofactor.

The enzyme catalyses orotidine 5'-phosphate + diphosphate = orotate + 5-phospho-alpha-D-ribose 1-diphosphate. It participates in pyrimidine metabolism; UMP biosynthesis via de novo pathway; UMP from orotate: step 1/2. Catalyzes the transfer of a ribosyl phosphate group from 5-phosphoribose 1-diphosphate to orotate, leading to the formation of orotidine monophosphate (OMP). This chain is Orotate phosphoribosyltransferase, found in Alteromonas mediterranea (strain DSM 17117 / CIP 110805 / LMG 28347 / Deep ecotype).